A 96-amino-acid chain; its full sequence is C-C motif chemokine 20 (96 aa).

Positions 1–26 are cleaved as a signal peptide; sequence MCCTKSLLLAALMSVLLLHLCGESEA. Intrachain disulfides connect C32–C58 and C33–C74.

The protein belongs to the intercrine beta (chemokine CC) family. In terms of processing, C-terminal processed forms which lack 1, 3 or 6 amino acids are produced by proteolytic cleavage after secretion from peripheral blood monocytes. Expressed in the seminal plasma, endometrial fluid and follicular fluid (at protein level). Expressed predominantly in the liver, lymph nodes, appendix, peripheral blood lymphocytes, and fetal lung. Low levels seen in thymus, prostate, testis, small intestine and colon.

The protein localises to the secreted. Acts as a ligand for C-C chemokine receptor CCR6. Signals through binding and activation of CCR6 and induces a strong chemotactic response and mobilization of intracellular calcium ions. The ligand-receptor pair CCL20-CCR6 is responsible for the chemotaxis of dendritic cells (DC), effector/memory T-cells and B-cells and plays an important role at skin and mucosal surfaces under homeostatic and inflammatory conditions, as well as in pathology, including cancer and various autoimmune diseases. CCL20 acts as a chemotactic factor that attracts lymphocytes and, slightly, neutrophils, but not monocytes. Involved in the recruitment of both the pro-inflammatory IL17 producing helper T-cells (Th17) and the regulatory T-cells (Treg) to sites of inflammation. Required for optimal migration of thymic natural regulatory T cells (nTregs) and DN1 early thymocyte progenitor cells. C-terminal processed forms have been shown to be equally chemotactically active for leukocytes. Positively regulates sperm motility and chemotaxis via its binding to CCR6 which triggers Ca2+ mobilization in the sperm which is important for its motility. Inhibits proliferation of myeloid progenitors in colony formation assays. May be involved in formation and function of the mucosal lymphoid tissues by attracting lymphocytes and dendritic cells towards epithelial cells. Possesses antibacterial activity towards E.coli ATCC 25922 and S.aureus ATCC 29213. The sequence is that of C-C motif chemokine 20 (CCL20) from Homo sapiens (Human).